The primary structure comprises 431 residues: Divergent protein kinase domain 1B (431 aa).

At 1 to 30 the chain is on the cytoplasmic side; it reads MRRLRRLVHLVLLCPFSKGLQGRLPGLRVK. The May mediate ER retention motif lies at 5–6; sequence RR. Residues 31-51 form a helical membrane-spanning segment; it reads YVLLVWLGIFVGSWMVYVHYS. Residues 52–431 lie on the Lumenal side of the membrane; the sequence is SYSELCRGHV…WREISNTNYS (380 aa). 2 disulfide bridges follow: Cys57–Cys94 and Cys62–Cys117.

This sequence belongs to the DIPK family. Post-translationally, among the many cysteines in the lumenal domain, most are probably involved in disulfide bonds.

It is found in the endoplasmic reticulum membrane. The chain is Divergent protein kinase domain 1B from Rattus norvegicus (Rat).